The sequence spans 255 residues: Cytochrome b561 and DOMON domain-containing protein At5g48750 (255 aa).

An N-terminal signal peptide occupies residues 1–27 (MFLSSRTIFVGLCFLFVLAPCFTRATT). A DOMON domain is found at 54 to 169 (LDSFLHYSYV…TVVNHLWQDG (116 aa)). Positions 176–255 (RLGMHAMSGN…DPTWFYILIL (80 aa)) constitute a Cytochrome b561 domain. The helical transmembrane segment at 216–236 (IHGLVNAVCWGIFIPIGVMAA) threads the bilayer.

It is found in the membrane. In Arabidopsis thaliana (Mouse-ear cress), this protein is Cytochrome b561 and DOMON domain-containing protein At5g48750.